The following is a 471-amino-acid chain: Actin-related protein 8 (471 aa).

The F-box domain occupies Leu40 to Tyr86. Asn256 to Phe259 provides a ligand contact to ATP.

It belongs to the actin family. Plant ARP8 subfamily. Ubiquitously expressed in all organs and cell types. Higher expression in seedlings.

It localises to the nucleus. It is found in the nucleolus. The protein localises to the cytoplasm. This is Actin-related protein 8 (ARP8) from Arabidopsis thaliana (Mouse-ear cress).